The sequence spans 455 residues: Phosphoglycerate kinase, glycosomal (455 aa).

(2R)-3-phosphoglycerate contacts are provided by Val-23, Asp-24, Phe-25, Asn-26, Arg-39, Ser-61, His-62, Gly-64, Arg-65, Arg-132, His-168, and Arg-169. ADP is bound by residues Gly-214 and Ala-215. Residue Gly-214 coordinates CDP. AMP contacts are provided by Ala-215 and Lys-216. Ala-215 contacts ATP. Ala-215 serves as a coordination point for Mg(2+). Lys-216 is a binding site for (2R)-3-phosphoglycerate. Asp-219 is a CDP binding site. A Mg(2+)-binding site is contributed by Asp-219. The ADP site is built by Lys-220 and Gly-238. An AMP-binding site is contributed by Lys-220. Residue Lys-220 participates in ATP binding. Gly-238 is a CDP binding site. The AMP site is built by Ala-239 and Ala-311. ATP is bound by residues Ala-239 and Ala-311. Ala-311 and Asn-335 together coordinate ADP. Positions 336 and 341 each coordinate CDP. The ADP site is built by Phe-341, Glu-342, Asp-374, and Thr-375. Glu-342 is an AMP binding site. ATP contacts are provided by Glu-342, Asp-374, and Thr-375. Asp-374 is a Mg(2+) binding site. Residues 417 to 455 (DAKAPAAAAAAGGDCPCGSGCAAVPAAATATVSMVLASP) are topogenic signal.

It belongs to the phosphoglycerate kinase family. In terms of assembly, monomer. It depends on Mg(2+) as a cofactor.

The protein resides in the glycosome. The catalysed reaction is (2R)-3-phosphoglycerate + ATP = (2R)-3-phospho-glyceroyl phosphate + ADP. It functions in the pathway carbohydrate degradation; glycolysis; pyruvate from D-glyceraldehyde 3-phosphate: step 2/5. This chain is Phosphoglycerate kinase, glycosomal (PGKC), found in Crithidia fasciculata.